The sequence spans 91 residues: CRISPR-associated endoribonuclease Cas2 2 (91 aa).

Asp8 lines the Mg(2+) pocket.

It belongs to the CRISPR-associated endoribonuclease Cas2 protein family. As to quaternary structure, homodimer, forms a heterotetramer with a Cas1 homodimer. It depends on Mg(2+) as a cofactor.

In terms of biological role, CRISPR (clustered regularly interspaced short palindromic repeat), is an adaptive immune system that provides protection against mobile genetic elements (viruses, transposable elements and conjugative plasmids). CRISPR clusters contain sequences complementary to antecedent mobile elements and target invading nucleic acids. CRISPR clusters are transcribed and processed into CRISPR RNA (crRNA). Functions as a ssRNA-specific endoribonuclease. Involved in the integration of spacer DNA into the CRISPR cassette. The sequence is that of CRISPR-associated endoribonuclease Cas2 2 from Pyrobaculum aerophilum (strain ATCC 51768 / DSM 7523 / JCM 9630 / CIP 104966 / NBRC 100827 / IM2).